A 129-amino-acid polypeptide reads, in one-letter code: Glycine cleavage system H protein (129 aa).

The Lipoyl-binding domain occupies 24 to 106 (SVVVGVTQHA…YGAGWIVEIE (83 aa)). At lysine 65 the chain carries N6-lipoyllysine.

The protein belongs to the GcvH family. In terms of assembly, the glycine cleavage system is composed of four proteins: P, T, L and H. The cofactor is (R)-lipoate.

Its function is as follows. The glycine cleavage system catalyzes the degradation of glycine. The H protein shuttles the methylamine group of glycine from the P protein to the T protein. This is Glycine cleavage system H protein from Myxococcus xanthus (strain DK1622).